A 134-amino-acid polypeptide reads, in one-letter code: Probable salivary secreted peptide (134 aa).

A signal peptide spans methionine 1 to threonine 24.

It localises to the secreted. This is Probable salivary secreted peptide from Bombus ignitus (Bumblebee).